We begin with the raw amino-acid sequence, 197 residues long: ATP-dependent Clp protease proteolytic subunit (197 aa).

Ser98 acts as the Nucleophile in catalysis. The active site involves His123.

It belongs to the peptidase S14 family. Fourteen ClpP subunits assemble into 2 heptameric rings which stack back to back to give a disk-like structure with a central cavity, resembling the structure of eukaryotic proteasomes.

It localises to the cytoplasm. It carries out the reaction Hydrolysis of proteins to small peptides in the presence of ATP and magnesium. alpha-casein is the usual test substrate. In the absence of ATP, only oligopeptides shorter than five residues are hydrolyzed (such as succinyl-Leu-Tyr-|-NHMec, and Leu-Tyr-Leu-|-Tyr-Trp, in which cleavage of the -Tyr-|-Leu- and -Tyr-|-Trp bonds also occurs).. Its function is as follows. Cleaves peptides in various proteins in a process that requires ATP hydrolysis. Has a chymotrypsin-like activity. Plays a major role in the degradation of misfolded proteins. This Pediococcus pentosaceus (strain ATCC 25745 / CCUG 21536 / LMG 10740 / 183-1w) protein is ATP-dependent Clp protease proteolytic subunit.